Here is a 306-residue protein sequence, read N- to C-terminus: Pantothenate kinase (306 aa).

91–98 (GSVAVGKS) is a binding site for ATP.

This sequence belongs to the prokaryotic pantothenate kinase family.

The protein resides in the cytoplasm. It catalyses the reaction (R)-pantothenate + ATP = (R)-4'-phosphopantothenate + ADP + H(+). It participates in cofactor biosynthesis; coenzyme A biosynthesis; CoA from (R)-pantothenate: step 1/5. The sequence is that of Pantothenate kinase from Streptococcus gordonii (strain Challis / ATCC 35105 / BCRC 15272 / CH1 / DL1 / V288).